We begin with the raw amino-acid sequence, 264 residues long: Phosphate import ATP-binding protein PstB (264 aa).

In terms of domain architecture, ABC transporter spans 11–250; sequence LKAEALSVYY…DTTEKIFDSP (240 aa). 43-50 contacts ATP; sequence GPSGCGKS.

This sequence belongs to the ABC transporter superfamily. Phosphate importer (TC 3.A.1.7) family. As to quaternary structure, the complex is composed of two ATP-binding proteins (PstB), two transmembrane proteins (PstC and PstA) and a solute-binding protein (PstS).

The protein localises to the cell inner membrane. It carries out the reaction phosphate(out) + ATP + H2O = ADP + 2 phosphate(in) + H(+). Its function is as follows. Part of the ABC transporter complex PstSACB involved in phosphate import. Responsible for energy coupling to the transport system. In Synechococcus sp. (strain ATCC 27144 / PCC 6301 / SAUG 1402/1) (Anacystis nidulans), this protein is Phosphate import ATP-binding protein PstB.